A 170-amino-acid chain; its full sequence is MKLMNVVKLMIRAIARAKKTDKPIVYIDMDNVLVDFQSGIDSLSIWEKNQYEGRYDECPGIFAHMKPMKGAIAAFEVLNKHFDCYILSTAPWDNPGSWQDKRLWVERYLGKGAYKRLILSHHKQLNFGHYLIDDRTKNGAGEFMGEHIHFGTDEFPDWFSVVTYLTSENK.

Aspartate 28 acts as the Nucleophile in catalysis. Residues aspartate 28, aspartate 30, and aspartate 134 each contribute to the Mg(2+) site. Aspartate 30 acts as the Proton donor in catalysis.

It belongs to the 5'(3')-deoxyribonucleotidase family. Mg(2+) is required as a cofactor.

In terms of biological role, dephosphorylates the 5' and 2'(3')-phosphates of deoxyribonucleotides. This chain is Putative 5'(3')-deoxyribonucleotidase, found in Vibrio parahaemolyticus (KVP40).